A 123-amino-acid chain; its full sequence is uncharacterized protein (123 aa).

The disordered stretch occupies residues 17–74 (FQKKKKTGSQTRRTLKPQPQQLQQNLPKGHETTGHTYERVLQQQGSQERSPGLMSEDS). T30 carries the post-translational modification Phosphothreonine. Positions 32-43 (KPQPQQLQQNLP) are enriched in low complexity. A compositionally biased stretch (basic and acidic residues) spans 44 to 54 (KGHETTGHTYE). The residue at position 62 (S62) is a Phosphoserine.

This is an uncharacterized protein from Homo sapiens (Human).